A 325-amino-acid polypeptide reads, in one-letter code: Tetraacyldisaccharide 4'-kinase (325 aa).

55–62 (TAGGNGKT) lines the ATP pocket.

Belongs to the LpxK family.

It catalyses the reaction a lipid A disaccharide + ATP = a lipid IVA + ADP + H(+). Its pathway is glycolipid biosynthesis; lipid IV(A) biosynthesis; lipid IV(A) from (3R)-3-hydroxytetradecanoyl-[acyl-carrier-protein] and UDP-N-acetyl-alpha-D-glucosamine: step 6/6. Functionally, transfers the gamma-phosphate of ATP to the 4'-position of a tetraacyldisaccharide 1-phosphate intermediate (termed DS-1-P) to form tetraacyldisaccharide 1,4'-bis-phosphate (lipid IVA). In Salmonella agona (strain SL483), this protein is Tetraacyldisaccharide 4'-kinase.